The primary structure comprises 209 residues: Uridine kinase (209 aa).

Residue 12 to 19 (GGSGSGKT) coordinates ATP.

The protein belongs to the uridine kinase family.

It localises to the cytoplasm. It catalyses the reaction uridine + ATP = UMP + ADP + H(+). The enzyme catalyses cytidine + ATP = CMP + ADP + H(+). It participates in pyrimidine metabolism; CTP biosynthesis via salvage pathway; CTP from cytidine: step 1/3. It functions in the pathway pyrimidine metabolism; UMP biosynthesis via salvage pathway; UMP from uridine: step 1/1. The chain is Uridine kinase from Streptococcus mutans serotype c (strain ATCC 700610 / UA159).